The following is a 167-amino-acid chain: Small ribosomal subunit protein uS5 (167 aa).

Residues 11–74 (LQEKLIAVNR…EKARRNMINV (64 aa)) form the S5 DRBM domain.

This sequence belongs to the universal ribosomal protein uS5 family. In terms of assembly, part of the 30S ribosomal subunit. Contacts proteins S4 and S8.

In terms of biological role, with S4 and S12 plays an important role in translational accuracy. Its function is as follows. Located at the back of the 30S subunit body where it stabilizes the conformation of the head with respect to the body. This Escherichia coli O139:H28 (strain E24377A / ETEC) protein is Small ribosomal subunit protein uS5.